The primary structure comprises 574 residues: Proline--tRNA ligase (574 aa).

The protein belongs to the class-II aminoacyl-tRNA synthetase family. ProS type 1 subfamily. As to quaternary structure, homodimer.

It is found in the cytoplasm. The catalysed reaction is tRNA(Pro) + L-proline + ATP = L-prolyl-tRNA(Pro) + AMP + diphosphate. Its function is as follows. Catalyzes the attachment of proline to tRNA(Pro) in a two-step reaction: proline is first activated by ATP to form Pro-AMP and then transferred to the acceptor end of tRNA(Pro). As ProRS can inadvertently accommodate and process non-cognate amino acids such as alanine and cysteine, to avoid such errors it has two additional distinct editing activities against alanine. One activity is designated as 'pretransfer' editing and involves the tRNA(Pro)-independent hydrolysis of activated Ala-AMP. The other activity is designated 'posttransfer' editing and involves deacylation of mischarged Ala-tRNA(Pro). The misacylated Cys-tRNA(Pro) is not edited by ProRS. This Nitratidesulfovibrio vulgaris (strain ATCC 29579 / DSM 644 / CCUG 34227 / NCIMB 8303 / VKM B-1760 / Hildenborough) (Desulfovibrio vulgaris) protein is Proline--tRNA ligase.